The chain runs to 304 residues: Carbonic anhydrase 5A, mitochondrial (304 aa).

The N-terminal 34 residues, 1-34, are a transit peptide targeting the mitochondrion; it reads MLRAKMLGRGPYKPLAILRHMGPLCATRPQHWRF. Positions 35–295 constitute an Alpha-carbonic anhydrase domain; it reads QHSYAEKHSN…LRGRNVRSSF (261 aa). Residues histidine 129, histidine 131, and histidine 154 each coordinate Zn(2+).

Belongs to the alpha-carbonic anhydrase family. Zn(2+) serves as cofactor. High in liver, also detected in heart, lung, kidney, spleen and intestine.

It is found in the mitochondrion. The catalysed reaction is hydrogencarbonate + H(+) = CO2 + H2O. In terms of biological role, mitochondrial carbonic anhydrase that catalyzes the reversible conversion of carbon dioxide to bicarbonate/HCO3. Mitochondria are impermeable to HCO3, and thus this intramitochondrial carbonic anhydrase is pivotal in providing HCO3 for multiple mitochondrial enzymes that catalyze the formation of essential metabolites of intermediary metabolism in the urea and Krebs cycles. The chain is Carbonic anhydrase 5A, mitochondrial from Rattus norvegicus (Rat).